The chain runs to 256 residues: Triosephosphate isomerase (256 aa).

9–11 (NWK) lines the substrate pocket. His97 serves as the catalytic Electrophile. Glu169 acts as the Proton acceptor in catalysis. Substrate contacts are provided by residues Gly175, Ser214, and 235–236 (GG).

The protein belongs to the triosephosphate isomerase family. As to quaternary structure, homodimer.

The protein resides in the cytoplasm. The enzyme catalyses D-glyceraldehyde 3-phosphate = dihydroxyacetone phosphate. It functions in the pathway carbohydrate biosynthesis; gluconeogenesis. The protein operates within carbohydrate degradation; glycolysis; D-glyceraldehyde 3-phosphate from glycerone phosphate: step 1/1. Its function is as follows. Involved in the gluconeogenesis. Catalyzes stereospecifically the conversion of dihydroxyacetone phosphate (DHAP) to D-glyceraldehyde-3-phosphate (G3P). This Aliivibrio fischeri (strain ATCC 700601 / ES114) (Vibrio fischeri) protein is Triosephosphate isomerase.